We begin with the raw amino-acid sequence, 393 residues long: G protein-activated inward rectifier potassium channel 3 (393 aa).

Residues 1–23 (MAQENAAFSPGSEEPPRRRGRQR) are disordered. Residues 1 to 57 (MAQENAAFSPGSEEPPRRRGRQRYVEKDGRCNVQQGNVRETYRYLTDLFTTLVDLQW) are Cytoplasmic-facing. The chain crosses the membrane as a helical span at residues 58-82 (RLSLLFFVLAYALTWLFFGAIWWLI). Topologically, residues 83-106 (AYGRGDLEHLEDTAWTPCVNNLNG) are extracellular. Residues 107-118 (FVAAFLFSIETE) constitute an intramembrane region (helical; Pore-forming). An intramembrane region (pore-forming) is located at residues 119–125 (TTIGYGH). Residues 120–125 (TIGYGH) carry the Selectivity filter motif. At 126 to 134 (RVITDQCPE) the chain is on the extracellular side. The helical transmembrane segment at 135–156 (GIVLLLLQAILGSMVNAFMVGC) threads the bilayer. At 157–393 (MFVKISQPNK…LPPPESESKV (237 aa)) the chain is on the cytoplasmic side. Positions 360-393 (KVEEEGAGEGAGAGDGADKEHNGCLPPPESESKV) are disordered. Over residues 384–393 (LPPPESESKV) the composition is skewed to pro residues. The PDZ-binding motif lies at 390 to 393 (ESKV).

It belongs to the inward rectifier-type potassium channel (TC 1.A.2.1) family. KCNJ9 subfamily. As to quaternary structure, associates with KCNJ3/GIRK1 to form a G-protein-activated heteromultimer pore-forming unit. Interacts (via PDZ-binding motif) with SNX27 (via PDZ domain); the interaction is required when endocytosed to prevent degradation in lysosomes and promote recycling to the plasma membrane. Expressed mainly in the brain, some expression in the skeletal muscle.

The protein localises to the membrane. It catalyses the reaction K(+)(in) = K(+)(out). Its function is as follows. Inward rectifier potassium channels are characterized by a greater tendency to allow potassium to flow into the cell rather than out of it. Their voltage dependence is regulated by the concentration of extracellular potassium; as external potassium is raised, the voltage range of the channel opening shifts to more positive voltages. The inward rectification is mainly due to the blockage of outward current by internal magnesium. This receptor is controlled by G proteins. Unable to produce channel activity when expressed alone. Forms a functional channel in association with KCNJ3/GIRK1. This is G protein-activated inward rectifier potassium channel 3 (Kcnj9) from Mus musculus (Mouse).